A 46-amino-acid polypeptide reads, in one-letter code: Viscotoxin-1-PS (46 aa).

3 disulfides stabilise this stretch: cysteine 3–cysteine 40, cysteine 4–cysteine 32, and cysteine 16–cysteine 26.

Belongs to the plant thionin (TC 1.C.44) family.

It is found in the secreted. Thionins are small plant proteins which are toxic to animal cells. They seem to exert their toxic effect at the level of the cell membrane. Their precise function is not known. This chain is Viscotoxin-1-PS (THI2.4), found in Viscum album (European mistletoe).